We begin with the raw amino-acid sequence, 250 residues long: uncharacterized protein (250 aa).

A coiled-coil region spans residues 165–208 (HLNLETANTKATEYQKNYQEELKQRQELRQKLLQERTQKMLEAL). A compositionally biased stretch (basic and acidic residues) spans 201–233 (TQKMLEALHQEETPEQDARDTAKKKTDQEEHTM). The segment at 201–250 (TQKMLEALHQEETPEQDARDTAKKKTDQEEHTMRKANAPKTKASGEAPTP) is disordered.

This is an uncharacterized protein from Treponema pallidum (strain Nichols).